We begin with the raw amino-acid sequence, 498 residues long: L-amino acid oxidase Bs29 (498 aa).

An N-terminal signal peptide occupies residues 1-3 (SCA). The cysteines at positions 12 and 175 are disulfide-linked. Residues 45-46 (MS), 65-66 (EA), R73, and 89-92 (GPMR) contribute to the FAD site. Residue R92 coordinates substrate. N-linked (GlcNAc...) asparagine glycosylation is present at N174. H225 is a binding site for substrate. V263 contacts FAD. C333 and C414 are oxidised to a cystine. Y374 lines the substrate pocket. FAD contacts are provided by residues E459 and 466-471 (GWIDST). Substrate is bound at residue 466–467 (GW).

It belongs to the flavin monoamine oxidase family. FIG1 subfamily. As to quaternary structure, monomer. This is in contrast with most of its orthologs, that are non-covalently linked homodimers. The cofactor is FAD. As to expression, expressed by the venom gland.

The protein resides in the secreted. It catalyses the reaction an L-alpha-amino acid + O2 + H2O = a 2-oxocarboxylate + H2O2 + NH4(+). The enzyme catalyses L-leucine + O2 + H2O = 4-methyl-2-oxopentanoate + H2O2 + NH4(+). Its function is as follows. Catalyzes an oxidative deamination of predominantly hydrophobic and aromatic L-amino acids, thus producing hydrogen peroxide that may contribute to the diverse toxic effects of this enzyme. Shows activity on L-Leu. Damage cell membranes of the Gram-positive bacteria S.aureus (MIC=4 ug/ml and MBC=8 ug/ml) and the Gram-negative bacteria A.baumanni (MIC=2 ug/ml and MBC=4 ug/ml). This antibacterial activity is dependent on the production of hydrogen peroxyde, since it is inhibited by catalase, a hydrogen peroxyde scavenger. This Bothriechis schlegelii (Eyelash palm pitviper) protein is L-amino acid oxidase Bs29.